We begin with the raw amino-acid sequence, 357 residues long: Protein pelota homolog (357 aa).

Belongs to the eukaryotic release factor 1 family. Pelota subfamily. As to quaternary structure, monomer. The cofactor is a divalent metal cation.

The protein resides in the cytoplasm. Its function is as follows. May function in recognizing stalled ribosomes, interact with stem-loop structures in stalled mRNA molecules, and effect endonucleolytic cleavage of the mRNA. May play a role in the release non-functional ribosomes and degradation of damaged mRNAs. Has endoribonuclease activity. The polypeptide is Protein pelota homolog (Thermococcus gammatolerans (strain DSM 15229 / JCM 11827 / EJ3)).